The sequence spans 373 residues: Dual-specificity RNA methyltransferase RlmN (373 aa).

Catalysis depends on Glu-94, which acts as the Proton acceptor. The 240-residue stretch at 100 to 339 (EDDRATLCVS…VIVRKTRGDD (240 aa)) folds into the Radical SAM core domain. A disulfide bridge connects residues Cys-107 and Cys-344. [4Fe-4S] cluster contacts are provided by Cys-114, Cys-118, and Cys-121. S-adenosyl-L-methionine is bound by residues 168–169 (GE), Ser-200, 222–224 (SIH), and Asn-301. Cys-344 functions as the S-methylcysteine intermediate in the catalytic mechanism.

The protein belongs to the radical SAM superfamily. RlmN family. Requires [4Fe-4S] cluster as cofactor.

The protein localises to the cytoplasm. The enzyme catalyses adenosine(2503) in 23S rRNA + 2 reduced [2Fe-2S]-[ferredoxin] + 2 S-adenosyl-L-methionine = 2-methyladenosine(2503) in 23S rRNA + 5'-deoxyadenosine + L-methionine + 2 oxidized [2Fe-2S]-[ferredoxin] + S-adenosyl-L-homocysteine. It carries out the reaction adenosine(37) in tRNA + 2 reduced [2Fe-2S]-[ferredoxin] + 2 S-adenosyl-L-methionine = 2-methyladenosine(37) in tRNA + 5'-deoxyadenosine + L-methionine + 2 oxidized [2Fe-2S]-[ferredoxin] + S-adenosyl-L-homocysteine. Functionally, specifically methylates position 2 of adenine 2503 in 23S rRNA and position 2 of adenine 37 in tRNAs. m2A2503 modification seems to play a crucial role in the proofreading step occurring at the peptidyl transferase center and thus would serve to optimize ribosomal fidelity. The sequence is that of Dual-specificity RNA methyltransferase RlmN from Shewanella amazonensis (strain ATCC BAA-1098 / SB2B).